The following is a 331-amino-acid chain: Pantothenate kinase (331 aa).

109–116 contacts ATP; it reads GSVAVGKS.

The protein belongs to the prokaryotic pantothenate kinase family.

The protein localises to the cytoplasm. It carries out the reaction (R)-pantothenate + ATP = (R)-4'-phosphopantothenate + ADP + H(+). Its pathway is cofactor biosynthesis; coenzyme A biosynthesis; CoA from (R)-pantothenate: step 1/5. This chain is Pantothenate kinase, found in Rhizobium leguminosarum bv. trifolii (strain WSM2304).